Reading from the N-terminus, the 297-residue chain is MTQETFTATTRVKRGLADMLKGGVIMDVVTPEQARIAEDAGASAVMALERVPADIRAQGGVARMSDPDLIEGIVNAVSIPVMAKARIGHFVEAQILESLGVDFIDESEVLSPADYVNHIDKWNFDVPFVCGATNLGEALRRITEGAAMIRSKGEAGTGDVSEAVKHLRTIRGEINRLRSMDEDQLYVAAKEIQAPYDLVREVAATGKLPVTLFVAGGVATPADAALVMQMGAEGVFVGSGIFKSGNPAARAAAIVKATTMYDDPAAIAEVSRGLGEAMVGINVADVPAPHRLAERGW.

Residue Asp27 participates in D-ribose 5-phosphate binding. The active-site Schiff-base intermediate with D-ribose 5-phosphate is Lys84. D-ribose 5-phosphate is bound at residue Gly156. Arg168 contributes to the D-glyceraldehyde 3-phosphate binding site. Residues Gly217 and 238-239 (GS) each bind D-ribose 5-phosphate.

The protein belongs to the PdxS/SNZ family. As to quaternary structure, in the presence of PdxT, forms a dodecamer of heterodimers.

It carries out the reaction aldehydo-D-ribose 5-phosphate + D-glyceraldehyde 3-phosphate + L-glutamine = pyridoxal 5'-phosphate + L-glutamate + phosphate + 3 H2O + H(+). The protein operates within cofactor biosynthesis; pyridoxal 5'-phosphate biosynthesis. Its function is as follows. Catalyzes the formation of pyridoxal 5'-phosphate from ribose 5-phosphate (RBP), glyceraldehyde 3-phosphate (G3P) and ammonia. The ammonia is provided by the PdxT subunit. Can also use ribulose 5-phosphate and dihydroxyacetone phosphate as substrates, resulting from enzyme-catalyzed isomerization of RBP and G3P, respectively. This is Pyridoxal 5'-phosphate synthase subunit PdxS from Corynebacterium diphtheriae (strain ATCC 700971 / NCTC 13129 / Biotype gravis).